Consider the following 206-residue polypeptide: LexA repressor (206 aa).

The H-T-H motif DNA-binding region spans 28–48; it reads VREIGEAVGLASSSTVHGHLA. Catalysis depends on for autocatalytic cleavage activity residues Ser-128 and Lys-166.

This sequence belongs to the peptidase S24 family. Homodimer.

It carries out the reaction Hydrolysis of Ala-|-Gly bond in repressor LexA.. Its function is as follows. Represses a number of genes involved in the response to DNA damage (SOS response), including recA and lexA. In the presence of single-stranded DNA, RecA interacts with LexA causing an autocatalytic cleavage which disrupts the DNA-binding part of LexA, leading to derepression of the SOS regulon and eventually DNA repair. The polypeptide is LexA repressor (Bacillus pumilus (strain SAFR-032)).